A 775-amino-acid chain; its full sequence is 1,4-alpha-glucan branching enzyme GlgB (775 aa).

The tract at residues 1–39 (MTSVHDFATATRPATPSAAAQEPAPALPPGLDRNTLDAL) is disordered. Over residues 8–24 (ATATRPATPSAAAQEPA) the composition is skewed to low complexity. Catalysis depends on D454, which acts as the Nucleophile. E507 serves as the catalytic Proton donor.

Belongs to the glycosyl hydrolase 13 family. GlgB subfamily. Monomer.

It catalyses the reaction Transfers a segment of a (1-&gt;4)-alpha-D-glucan chain to a primary hydroxy group in a similar glucan chain.. It participates in glycan biosynthesis; glycogen biosynthesis. Catalyzes the formation of the alpha-1,6-glucosidic linkages in glycogen by scission of a 1,4-alpha-linked oligosaccharide from growing alpha-1,4-glucan chains and the subsequent attachment of the oligosaccharide to the alpha-1,6 position. This Ralstonia nicotianae (strain ATCC BAA-1114 / GMI1000) (Ralstonia solanacearum) protein is 1,4-alpha-glucan branching enzyme GlgB.